The chain runs to 884 residues: uncharacterized protein (884 aa).

This is an uncharacterized protein from Mycobacterium tuberculosis (strain ATCC 25618 / H37Rv).